A 388-amino-acid polypeptide reads, in one-letter code: MKHLHRFFSSDASGGIILIIAAALAMLMANMGATSGWYHDFLETPVQLRVGALEINKNMLLWINDALMAVFFLLIGLEVKRELMQGSLASLRQAAFPVIAAIGGMIVPALLYLAFNYSDPVTREGWAIPAATDIAFALGVLALLGSRVPLALKIFLMALAIIDDLGAIIIIALFYTSDLSIVSLGVAAFAIAVLALLNLCGVRRTGVYILVGAVLWTAVLKSGVHATLAGVIVGFFIPLKEKHGRSPAKRLEHVLHPWVAYLILPLFAFANAGVSLQGVTMDGLTSMLPLGIIAGLLIGKPLGISLFCWLALRFKLAHLPQGTTYQQIMAVGILCGIGFTMSIFIASLAFGNIDPELINWAKLGILIGSLLSAVVGYSWLRARLNAPA.

A run of 11 helical transmembrane segments spans residues 14–34 (GGII…MGAT), 59–79 (MLLW…GLEV), 95–115 (AFPV…YLAF), 125–145 (GWAI…ALLG), 154–174 (IFLM…IALF), 179–199 (LSIV…LLNL), 219–239 (VLKS…FIPL), 254–274 (VLHP…NAGV), 292–312 (IIAG…WLAL), 328–348 (IMAV…IASL), and 360–380 (WAKL…YSWL).

It belongs to the NhaA Na(+)/H(+) (TC 2.A.33) antiporter family.

Its subcellular location is the cell inner membrane. The catalysed reaction is Na(+)(in) + 2 H(+)(out) = Na(+)(out) + 2 H(+)(in). Na(+)/H(+) antiporter that extrudes sodium in exchange for external protons. This is Na(+)/H(+) antiporter NhaA from Salmonella paratyphi A (strain ATCC 9150 / SARB42).